The chain runs to 156 residues: Small ribosomal subunit protein uS7 (156 aa).

It belongs to the universal ribosomal protein uS7 family. In terms of assembly, part of the 30S ribosomal subunit. Contacts proteins S9 and S11.

Functionally, one of the primary rRNA binding proteins, it binds directly to 16S rRNA where it nucleates assembly of the head domain of the 30S subunit. Is located at the subunit interface close to the decoding center, probably blocks exit of the E-site tRNA. This is Small ribosomal subunit protein uS7 from Lactobacillus johnsonii (strain CNCM I-12250 / La1 / NCC 533).